Consider the following 491-residue polypeptide: N-succinylglutamate 5-semialdehyde dehydrogenase (491 aa).

Residue 223 to 228 participates in NAD(+) binding; the sequence is GSANTG. Active-site residues include E246 and C280.

The protein belongs to the aldehyde dehydrogenase family. AstD subfamily.

It catalyses the reaction N-succinyl-L-glutamate 5-semialdehyde + NAD(+) + H2O = N-succinyl-L-glutamate + NADH + 2 H(+). The protein operates within amino-acid degradation; L-arginine degradation via AST pathway; L-glutamate and succinate from L-arginine: step 4/5. Catalyzes the NAD-dependent reduction of succinylglutamate semialdehyde into succinylglutamate. The polypeptide is N-succinylglutamate 5-semialdehyde dehydrogenase (Photorhabdus laumondii subsp. laumondii (strain DSM 15139 / CIP 105565 / TT01) (Photorhabdus luminescens subsp. laumondii)).